The following is a 904-amino-acid chain: Disintegrin and metalloproteinase domain-containing protein 22 (904 aa).

The signal sequence occupies residues 1–23 (MQAAAAASFWLLCVLGTCPLARC). Residues 24–223 (GRAGVASLKG…LKPRLKRRKR (200 aa)) constitute a propeptide that is removed on maturation. Residues 24-734 (GRAGVASLKG…LSGNGVAGTN (711 aa)) are Extracellular-facing. N163 carries N-linked (GlcNAc...) asparagine glycosylation. Residues 237 to 436 (KYIELMIVND…GGGACLFNKP (200 aa)) enclose the Peptidase M12B domain. 17 cysteine pairs are disulfide-bonded: C347–C431, C390–C415, C392–C399, C445–C475, C456–C472, C458–C464, C471–C492, C483–C489, C488–C514, C501–C521, C508–C540, C533–C545, C552–C603, C567–C633, C581–C591, C598–C661, and C655–C666. The Disintegrin domain occupies 442–529 (PPECGNGFIE…QCAPNVHKMD (88 aa)). N-linked (GlcNAc...) asparagine glycosylation is present at N517. N-linked (GlcNAc...) asparagine glycosylation is present at N632. The N-linked (GlcNAc...) asparagine glycan is linked to N673. An EGF-like domain is found at 673-710 (NFSTCSSSKAGTVCSGNGVCSNELKCVCNRHWTGADCG). 3 disulfide bridges follow: C677/C692, C686/C698, and C700/C709. Residues 735 to 755 (IIIGIIAGTILVLALILGITA) form a helical membrane-spanning segment. The Cytoplasmic portion of the chain corresponds to 756–857 (WGYKNYREQR…RFRPRSNSTE (102 aa)). Residues 769 to 904 (QGDYVKKPGD…QSARLWETSI (136 aa)) are disordered. Positions 789–808 (GGSTNSASSSKKRSNGLSHS) are enriched in low complexity. A phosphoserine mark is found at S808, K817, and S832. Over residues 809–827 (WSERIPDTKHISDICENGR) the composition is skewed to basic and acidic residues. Residues 840-851 (NKKKIRGKRFRP) are compositionally biased toward basic residues. Phosphoserine is present on residues S855, S860, S864, S868, and M882. Over residues 860 to 875 (SPAKSPSSSTGSIASS) the composition is skewed to low complexity.

Interacts with LGI1. Can bind to LGI4. Interacts with KCNA2, DLG2 and DLG4. Interacts with ADAM11. Interacts (via C-terminus) with YWHAB/14-3-3 beta. Interacts (via C-terminus) with YWHAZ/14-3-3 zeta. The precursor is cleaved by a furin endopeptidase. Detected in juxtaparanodal zones in the central nervous system and at nerve terminal plexuses of basket cells in the cerebellum (at protein level). Expressed at high levels in the brain. Strongly expressed in cerebellar granule cells and hippocampus. In spinal cord, expression is restricted to gray matter.

The protein resides in the cell membrane. It localises to the cell projection. The protein localises to the axon. Its function is as follows. Probable ligand for integrin in the brain. This is a non catalytic metalloprotease-like protein. Involved in regulation of cell adhesion and spreading and in inhibition of cell proliferation. Neuronal receptor for LGI1. This chain is Disintegrin and metalloproteinase domain-containing protein 22 (Adam22), found in Mus musculus (Mouse).